The sequence spans 302 residues: Deoxyribonuclease-1-like 1 (302 aa).

The signal sequence occupies residues methionine 1 to alanine 18. Active-site residues include glutamate 97 and histidine 148. A disulfide bridge connects residues cysteine 187 and cysteine 224. An N-linked (GlcNAc...) asparagine glycan is attached at asparagine 261.

Belongs to the DNase I family.

The protein resides in the endoplasmic reticulum. This chain is Deoxyribonuclease-1-like 1 (DNASE1L1), found in Chlorocebus aethiops (Green monkey).